Consider the following 1020-residue polypeptide: 5'-3' exoribonuclease 3 (1020 aa).

Residues 113-144 (QQRSRRFRSAKDASDAAAEEERLREEFEREGR) are disordered. Residues 121 to 144 (SAKDASDAAAEEERLREEFEREGR) show a composition bias toward basic and acidic residues. The CCHC-type zinc-finger motif lies at 262-279 (ERCFLCGQMGHFASNCEG). 2 disordered regions span residues 411–440 (QHQR…TVQP) and 452–483 (RLAS…PGSS). The segment covering 414-433 (RQAERVKRDKAGKATKRMDD) has biased composition (basic and acidic residues). Positions 487–523 (AIVDVENSLESDERENKEELKTKLKELIREKSDAFNS) form a coiled coil. The segment covering 831–844 (NNHGMHNNHGMHNN) has biased composition (low complexity). Disordered stretches follow at residues 831 to 859 (NNHG…GRHL), 875 to 897 (TDRY…PQYV), and 911 to 1020 (PGAQ…RHRY). Low complexity-rich tracts occupy residues 911–923 (PGAQ…APYQ) and 960–972 (GNHQ…QQWH). Residues 1000-1020 (RGRGRGSHHHHDQGGNPRHRY) are compositionally biased toward basic residues.

It belongs to the 5'-3' exonuclease family. XRN2/RAT1 subfamily. As to expression, expressed in roots, leaves, stems and flowers.

It is found in the nucleus. Its function is as follows. Possesses 5'-&gt;3' exoribonuclease activity. Acts as an endogenous post-transcriptional gene silencing (PTGS) suppressor. Degrades miRNA-derived loops, excised during miRNA maturation in the nucleus. Required for proper development. Involved in pre-rRNA processing. Involved with XRN2 in the 5'-end exonucleolytic processing of 5.8S and 25S rRNAs. Contributes with XRN2 to polyadenylation-dependent nuclear RNA surveillance. Involved in the degradation of aberrant polyadenylated pre-rRNA through 5'-end processing. The protein is 5'-3' exoribonuclease 3 of Arabidopsis thaliana (Mouse-ear cress).